The following is a 456-amino-acid chain: 26S proteasome non-ATPase regulatory subunit 12 (456 aa).

The residue at position 2 (A2) is an N-acetylalanine. K92 participates in a covalent cross-link: Glycyl lysine isopeptide (Lys-Gly) (interchain with G-Cter in SUMO1); alternate. K92 is covalently cross-linked (Glycyl lysine isopeptide (Lys-Gly) (interchain with G-Cter in SUMO2); alternate). N6-acetyllysine occurs at positions 221 and 368. Residues 242 to 420 (SICKHYRAIY…GIINFQRPKD (179 aa)) form the PCI domain.

It belongs to the proteasome subunit p55 family. Component of the 19S proteasome regulatory particle complex. The 26S proteasome consists of a 20S core particle (CP) and two 19S regulatory subunits (RP). The regulatory particle is made of a lid composed of 9 subunits including PSMD12, a base containing 6 ATPases and few additional components. Interacts with ERCC6.

Its function is as follows. Component of the 26S proteasome, a multiprotein complex involved in the ATP-dependent degradation of ubiquitinated proteins. This complex plays a key role in the maintenance of protein homeostasis by removing misfolded or damaged proteins, which could impair cellular functions, and by removing proteins whose functions are no longer required. Therefore, the proteasome participates in numerous cellular processes, including cell cycle progression, apoptosis, or DNA damage repair. This chain is 26S proteasome non-ATPase regulatory subunit 12 (PSMD12), found in Bos taurus (Bovine).